A 476-amino-acid polypeptide reads, in one-letter code: Serine/threonine-protein kinase chk-2 (476 aa).

Residues 66-127 (FVCGRGSDDA…NGTLVNQEMI (62 aa)) enclose the FHA domain. The 267-residue stretch at 170–436 (HVTSHSLGKG…AVELMSTQWM (267 aa)) folds into the Protein kinase domain. Residues 177–184 (GKGGFGKV), Lys-199, and 252–258 (EYVGGGE) contribute to the ATP site. Residue Asp-301 is the Proton acceptor of the active site. Residues 305–306 (EN) and Asp-322 contribute to the ATP site.

It belongs to the protein kinase superfamily. CAMK Ser/Thr protein kinase family. CHK2 subfamily. Mg(2+) is required as a cofactor. As to expression, highly expressed in germline tissue.

Its subcellular location is the nucleus. It carries out the reaction L-seryl-[protein] + ATP = O-phospho-L-seryl-[protein] + ADP + H(+). The catalysed reaction is L-threonyl-[protein] + ATP = O-phospho-L-threonyl-[protein] + ADP + H(+). In terms of biological role, serine/threonine-protein kinase which is required for checkpoint-mediated cell cycle arrest, activation of DNA repair and apoptosis in response to the presence of DNA double-strand breaks. May also negatively regulate cell cycle progression during unperturbed cell cycles. Phosphorylates and inhibits cdc25 phosphatase, preventing entry into mitosis. Required for nuclear reorganization and homologous chromosome pairing during meiotic prophase. The sequence is that of Serine/threonine-protein kinase chk-2 (chk-2) from Caenorhabditis elegans.